The following is a 446-amino-acid chain: StAR-related lipid transfer protein 3 (446 aa).

Over 1–52 (MSKRPGDLACDLERSLPALASLGTSLSHSQSLSSHFIPPPLEKRRAISDVRR) the chain is Cytoplasmic. The MENTAL domain maps to 47–218 (ISDVRRTFCL…YSPPESFAGS (172 aa)). A helical transmembrane segment spans residues 53 to 73 (TFCLFVTFDLLFISLLWIIEL). The Extracellular portion of the chain corresponds to 74-95 (NTNTGIRKNLEQEVIHYSFQSS). A helical membrane pass occupies residues 96 to 116 (FFDIFVLAFFRFSGLLLGYAV). Residues 117 to 121 (LRLQH) lie on the Cytoplasmic side of the membrane. Residues 122–142 (WWVIAVTTLVSSAFLIVKVIL) form a helical membrane-spanning segment. The Extracellular portion of the chain corresponds to 143 to 149 (SELLSKG). Residues 150–170 (AFGYLLPIVSFVLAWLETWFL) form a helical membrane-spanning segment. Topologically, residues 171–446 (DFKVLPQEAE…QRVGELGARA (276 aa)) are cytoplasmic. The short motif at 207–213 (QFYSPPE) is the FFAT element. Phosphoserine is present on residues Ser210, Ser218, and Ser222. Positions 231–444 (SFSAQEREYI…LRQRVGELGA (214 aa)) constitute an START domain.

This sequence belongs to the STARD3 family. Homodimer. Interacts (via the MENTAL domain) with STARD3NL. Interacts (via phosphorylated FFAT motif) with VAPA (via MSP domain). Interacts (via phosphorylated FFAT motif) with VAPB (via MSP domain). Interacts (via phosphorylated FFAT motif) with MOSPD2 (via MSP domain); this interaction allows enrichment of MOSPD2 around endosomes. Post-translationally, phosphorylation at Ser-210 is necessary and sufficient for the direct interaction of the phosphorylated FFAT motif with the MSP domain of MOSPD2, VAPA and VAPB and allows the tethering of two membranes that participates in the formation of ER-endosome contacts. Phosphorylation of the FFAT motif leads to conformation changes. Additional phosphorylations around the core FFAT motif (QFYSPPE) are not essential but strengthen the interaction with MOSPD2, VAPA and VAPB. Phosphorylation at Ser-210 of FFAT motif drives membrane tethering between the endoplasmic reticulum and late endosomes via interaction with VAPA and VAPB that in turn allows the efficient transport of sterol mediated by the START domain.

The protein localises to the late endosome membrane. The enzyme catalyses cholesterol(in) = cholesterol(out). Its function is as follows. Sterol-binding protein that mediates cholesterol transport from the endoplasmic reticulum to endosomes. The sterol transport mechanism is triggered by phosphorylation of FFAT motif that leads to membrane tethering between the endoplasmic reticulum and late endosomes via interaction with VAPA and VAPB. Acts as a lipid transfer protein that redirects sterol to the endosome at the expense of the cell membrane and favors membrane formation inside endosomes. May also mediate cholesterol transport between other membranes, such as mitochondria membrane or cell membrane. However, such results need additional experimental evidences; probably mainly mediates cholesterol transport from the endoplasmic reticulum to endosomes. Does not activate transcriptional cholesterol sensing. Able to bind other lipids, such as lutein, a xanthophyll carotenoids that form the macular pigment of the retina. The sequence is that of StAR-related lipid transfer protein 3 from Mus musculus (Mouse).